We begin with the raw amino-acid sequence, 495 residues long: Siroheme synthase 2 (495 aa).

Residues 1–205 (MDHYPIFLNL…GREREAEQAM (205 aa)) are precorrin-2 dehydrogenase /sirohydrochlorin ferrochelatase. Residues 22-23 (ET) and 43-44 (PD) contribute to the NAD(+) site. Phosphoserine is present on Ser-130. The segment at 220–495 (GEVYLVGAGP…HPAPADTEQA (276 aa)) is uroporphyrinogen-III C-methyltransferase. Pro-229 provides a ligand contact to S-adenosyl-L-methionine. Asp-252 serves as the catalytic Proton acceptor. The active-site Proton donor is Lys-274. S-adenosyl-L-methionine-binding positions include 305-307 (GGD), Ile-310, 335-336 (TA), Met-387, and Ala-416. Positions 471 to 495 (FPEHGCLRGEPRPTRHPAPADTEQA) are disordered.

In the N-terminal section; belongs to the precorrin-2 dehydrogenase / sirohydrochlorin ferrochelatase family. It in the C-terminal section; belongs to the precorrin methyltransferase family.

It carries out the reaction uroporphyrinogen III + 2 S-adenosyl-L-methionine = precorrin-2 + 2 S-adenosyl-L-homocysteine + H(+). The catalysed reaction is precorrin-2 + NAD(+) = sirohydrochlorin + NADH + 2 H(+). It catalyses the reaction siroheme + 2 H(+) = sirohydrochlorin + Fe(2+). Its pathway is cofactor biosynthesis; adenosylcobalamin biosynthesis; precorrin-2 from uroporphyrinogen III: step 1/1. It functions in the pathway cofactor biosynthesis; adenosylcobalamin biosynthesis; sirohydrochlorin from precorrin-2: step 1/1. The protein operates within porphyrin-containing compound metabolism; siroheme biosynthesis; precorrin-2 from uroporphyrinogen III: step 1/1. It participates in porphyrin-containing compound metabolism; siroheme biosynthesis; siroheme from sirohydrochlorin: step 1/1. Its pathway is porphyrin-containing compound metabolism; siroheme biosynthesis; sirohydrochlorin from precorrin-2: step 1/1. Multifunctional enzyme that catalyzes the SAM-dependent methylations of uroporphyrinogen III at position C-2 and C-7 to form precorrin-2 via precorrin-1. Then it catalyzes the NAD-dependent ring dehydrogenation of precorrin-2 to yield sirohydrochlorin. Finally, it catalyzes the ferrochelation of sirohydrochlorin to yield siroheme. In Halorhodospira halophila (strain DSM 244 / SL1) (Ectothiorhodospira halophila (strain DSM 244 / SL1)), this protein is Siroheme synthase 2.